The sequence spans 122 residues: Small ribosomal subunit protein uS13 (122 aa).

Residues 97–122 are disordered; that stretch reads PVRGQRTHTNARTRKGPAKAIAGKKK.

This sequence belongs to the universal ribosomal protein uS13 family. In terms of assembly, part of the 30S ribosomal subunit. Forms a loose heterodimer with protein S19. Forms two bridges to the 50S subunit in the 70S ribosome.

Located at the top of the head of the 30S subunit, it contacts several helices of the 16S rRNA. In the 70S ribosome it contacts the 23S rRNA (bridge B1a) and protein L5 of the 50S subunit (bridge B1b), connecting the 2 subunits; these bridges are implicated in subunit movement. Contacts the tRNAs in the A and P-sites. The sequence is that of Small ribosomal subunit protein uS13 from Bartonella quintana (strain Toulouse) (Rochalimaea quintana).